The primary structure comprises 482 residues: 6-phosphogluconate dehydrogenase, decarboxylating (482 aa).

NADP(+) contacts are provided by residues 17 to 22 (GLAVMG), 40 to 42 (NRS), 82 to 84 (VKA), and N110. Residues N110 and 136-138 (SGG) contribute to the substrate site. K193 acts as the Proton acceptor in catalysis. Position 196-197 (196-197 (HN)) interacts with substrate. The active-site Proton donor is E200. Substrate contacts are provided by Y201, K272, R299, R457, and H463.

The protein belongs to the 6-phosphogluconate dehydrogenase family. In terms of assembly, homodimer.

It carries out the reaction 6-phospho-D-gluconate + NADP(+) = D-ribulose 5-phosphate + CO2 + NADPH. It functions in the pathway carbohydrate degradation; pentose phosphate pathway; D-ribulose 5-phosphate from D-glucose 6-phosphate (oxidative stage): step 3/3. Its function is as follows. Catalyzes the oxidative decarboxylation of 6-phosphogluconate to ribulose 5-phosphate and CO(2), with concomitant reduction of NADP to NADPH. In Synechocystis sp. (strain ATCC 27184 / PCC 6803 / Kazusa), this protein is 6-phosphogluconate dehydrogenase, decarboxylating (gnd).